The following is a 519-amino-acid chain: Alternative NAD(P)H-ubiquinone oxidoreductase C1, chloroplastic/mitochondrial (519 aa).

The N-terminal 52 residues, 1–52 (MAVLSSVSSLIPFSYGATRLTSKASLASRTSGFNLSSRWNSTRNSPMLYLSR), are a transit peptide targeting the chloroplast and mitochondrion. 82-118 (RVCILGGGFGGLYTALRLESLVWPEDKKPQVVLVDQS) serves as a coordination point for FAD. 246-282 (IKVAVVGCGYAGVELAATISERLQDRGIVQSINVSKN) lines the NAD(+) pocket.

Belongs to the NADH dehydrogenase family. FAD is required as a cofactor. In terms of tissue distribution, flowers, roots, leaves and stems.

The protein localises to the mitochondrion. It localises to the mitochondrion inner membrane. Its subcellular location is the plastid. The protein resides in the chloroplast. It is found in the plastoglobule. The catalysed reaction is a quinone + NADH + H(+) = a quinol + NAD(+). It carries out the reaction a ubiquinone + NADH + H(+) = a ubiquinol + NAD(+). It catalyses the reaction demethylphylloquinone + NADPH + H(+) = demethylphylloquinol + NADP(+). With respect to regulation, inhibited by dicumarol. Functionally, bifunctional oxidoreductase ables to act both on prenyl naphthoquinones and on prenyl benzoquinones. May serve a respiratory function. Involved in an electron flow toward the plastoglobule plastoquinone pool. Required for plastochromanol-8 accumulation and for phylloquinone (vitamin K1) production. Probably not directly involved in cyclic or chlororespiratory electron flows under standard growth conditions, but participates in the redox metabolism of plastoquinone-9 and the tocophrol recycling-intermediate alpha-tocopherol quinone. Catalyzes the penultimate step in the biosynthesis of vitamin K1. In Arabidopsis thaliana (Mouse-ear cress), this protein is Alternative NAD(P)H-ubiquinone oxidoreductase C1, chloroplastic/mitochondrial.